Consider the following 266-residue polypeptide: UPF0354 protein LMHCC_0955 (266 aa).

The protein belongs to the UPF0354 family.

The protein is UPF0354 protein LMHCC_0955 of Listeria monocytogenes serotype 4a (strain HCC23).